We begin with the raw amino-acid sequence, 326 residues long: tRNA-dihydrouridine(20/20a) synthase (326 aa).

FMN-binding positions include Pro-11 to Leu-13 and Gln-63. The Proton donor role is filled by Cys-93. Residues Lys-132, His-165, Asn-205 to Gly-207, and Gly-227 to Arg-228 contribute to the FMN site.

The protein belongs to the Dus family. DusA subfamily. Requires FMN as cofactor.

It carries out the reaction 5,6-dihydrouridine(20) in tRNA + NADP(+) = uridine(20) in tRNA + NADPH + H(+). The catalysed reaction is 5,6-dihydrouridine(20) in tRNA + NAD(+) = uridine(20) in tRNA + NADH + H(+). The enzyme catalyses 5,6-dihydrouridine(20a) in tRNA + NADP(+) = uridine(20a) in tRNA + NADPH + H(+). It catalyses the reaction 5,6-dihydrouridine(20a) in tRNA + NAD(+) = uridine(20a) in tRNA + NADH + H(+). Functionally, catalyzes the synthesis of 5,6-dihydrouridine (D), a modified base found in the D-loop of most tRNAs, via the reduction of the C5-C6 double bond in target uridines. Specifically modifies U20 and U20a in tRNAs. The chain is tRNA-dihydrouridine(20/20a) synthase from Vibrio vulnificus (strain CMCP6).